A 266-amino-acid chain; its full sequence is 4-hydroxy-tetrahydrodipicolinate reductase (266 aa).

10-15 (GPRGRM) serves as a coordination point for NAD(+). An NADP(+)-binding site is contributed by K38. Residues 99–101 (GTT) and 125–128 (APNF) each bind NAD(+). The Proton donor/acceptor role is filled by H155. H156 lines the (S)-2,3,4,5-tetrahydrodipicolinate pocket. The active-site Proton donor is K159. 165 to 166 (GT) provides a ligand contact to (S)-2,3,4,5-tetrahydrodipicolinate.

This sequence belongs to the DapB family.

Its subcellular location is the cytoplasm. It catalyses the reaction (S)-2,3,4,5-tetrahydrodipicolinate + NAD(+) + H2O = (2S,4S)-4-hydroxy-2,3,4,5-tetrahydrodipicolinate + NADH + H(+). It carries out the reaction (S)-2,3,4,5-tetrahydrodipicolinate + NADP(+) + H2O = (2S,4S)-4-hydroxy-2,3,4,5-tetrahydrodipicolinate + NADPH + H(+). Its pathway is amino-acid biosynthesis; L-lysine biosynthesis via DAP pathway; (S)-tetrahydrodipicolinate from L-aspartate: step 4/4. Catalyzes the conversion of 4-hydroxy-tetrahydrodipicolinate (HTPA) to tetrahydrodipicolinate. The sequence is that of 4-hydroxy-tetrahydrodipicolinate reductase from Bacillus mycoides (strain KBAB4) (Bacillus weihenstephanensis).